Consider the following 189-residue polypeptide: Protein GrpE (189 aa).

Residues 1-12 (MDKKKHGSHAGA) show a composition bias toward basic residues. The interval 1–36 (MDKKKHGSHAGAHHTDEPAAETVAPAAEGAPAAADR) is disordered. The span at 20-34 (AETVAPAAEGAPAAA) shows a compositional bias: low complexity.

The protein belongs to the GrpE family. In terms of assembly, homodimer.

It localises to the cytoplasm. Its function is as follows. Participates actively in the response to hyperosmotic and heat shock by preventing the aggregation of stress-denatured proteins, in association with DnaK and GrpE. It is the nucleotide exchange factor for DnaK and may function as a thermosensor. Unfolded proteins bind initially to DnaJ; upon interaction with the DnaJ-bound protein, DnaK hydrolyzes its bound ATP, resulting in the formation of a stable complex. GrpE releases ADP from DnaK; ATP binding to DnaK triggers the release of the substrate protein, thus completing the reaction cycle. Several rounds of ATP-dependent interactions between DnaJ, DnaK and GrpE are required for fully efficient folding. The chain is Protein GrpE from Geobacter metallireducens (strain ATCC 53774 / DSM 7210 / GS-15).